The chain runs to 2717 residues: Naringenin synthase (2717 aa).

An adenylation (A) domain region spans residues 13-422 (HHAVESRDKV…VGRKKELIIR (410 aa)). In terms of domain architecture, Carrier 1 spans 531-617 (AAVEALVLAE…AVRDYLFNRL (87 aa)). Position 576 is an O-(pantetheine 4'-phosphoryl)serine (Ser-576). One can recognise a Ketosynthase family 3 (KS3) domain in the interval 638 to 1066 (AEPIAIISMA…GTNAHIILEQ (429 aa)). Active-site for beta-ketoacyl synthase activity residues include Cys-810, His-945, and His-988. The region spanning 1204–1462 (PIFSRAFKEA…GPSAVLSPHV (259 aa)) is the Malonyl-CoA:ACP transacylase (MAT) domain. Positions 1549 to 1688 (HGVLYRTTSI…GTLKLISLPP (140 aa)) are N-terminal hotdog fold. Residues 1549 to 1847 (HGVLYRTTSI…LRAVQPPVVE (299 aa)) form the PKS/mFAS DH domain. The segment at 1561-1842 (TNDIICAGFV…ISEVMLRAVQ (282 aa)) is dehydratase (DH) domain. His-1581 functions as the Proton acceptor; for dehydratase activity in the catalytic mechanism. Residues 1703 to 1847 (NSEVDVSKAY…LRAVQPPVVE (145 aa)) form a C-terminal hotdog fold region. The active-site Proton donor; for dehydratase activity is Asp-1764. One can recognise a Ketoreductase (KR) domain in the interval 2008–2186 (GTVLITGGTG…AVSLAWGPWA (179 aa)). Residues 2277–2354 (SRSDTLLGLV…ALVQYLLDRI (78 aa)) enclose the Carrier 2 domain. An O-(pantetheine 4'-phosphoryl)serine modification is found at Ser-2313. Positions 2361–2373 (EIELDQDVAEEET) are enriched in acidic residues. The disordered stretch occupies residues 2361-2412 (EIELDQDVAEEETVSGTNGHQNGHQNGTQNGHSNGHANGASTNGDATDGIDP). Residues 2375-2396 (SGTNGHQNGHQNGTQNGHSNGH) are compositionally biased toward low complexity. The tract at residues 2497–2711 (SLSVYSAVAA…AIAVEIEHWA (215 aa)) is thioester reductase (TE) domain.

In the N-terminal section; belongs to the NRP synthetase family. It depends on pantetheine 4'-phosphate as a cofactor.

In terms of biological role, PKS-NRPS hybrid synthetase that, alone, is sufficient to produce naringenin chalcone, the direct precursor of naringenin, by using p-coumaric acid (p-CA) or p-hydroxybenzoic acid (p-HBA) with the involvement of malonyl-CoA molecules. The adenylation (A) domain activates p-CA or p-HBA as adenylates, which are transferred to the thiol group of the pantetheinyl residue of the T domain, and further transferred to the adjacent PKS portion of fnsA. Besides p-CA and p-HBA, the A domain is also able to activate other substrates such as cinnamic acid and salicyclic acid. Within the PKS portion of fnsA, p-CA and p-HBA act as starter units for respectively three or four malonyl-CoA molecules for elongation by the AT and KS domains of fnsA. Afterwards, naringenin chalcone is cyclized through Claisen condensation and thereby released either spontaneously or catalyzed by the TE domain. Finally, naringenin chalcone is converted to naringenin spontaneously or by a chalcone isomerase. This is Naringenin synthase from Pestalotiopsis fici (strain W106-1 / CGMCC3.15140).